The primary structure comprises 241 residues: Ribonuclease PH (241 aa).

Residues Arg-89 and 127–129 (GTR) contribute to the phosphate site.

Belongs to the RNase PH family. Homohexameric ring arranged as a trimer of dimers.

The enzyme catalyses tRNA(n+1) + phosphate = tRNA(n) + a ribonucleoside 5'-diphosphate. In terms of biological role, phosphorolytic 3'-5' exoribonuclease that plays an important role in tRNA 3'-end maturation. Removes nucleotide residues following the 3'-CCA terminus of tRNAs; can also add nucleotides to the ends of RNA molecules by using nucleoside diphosphates as substrates, but this may not be physiologically important. Probably plays a role in initiation of 16S rRNA degradation (leading to ribosome degradation) during starvation. The chain is Ribonuclease PH from Stenotrophomonas maltophilia (strain K279a).